Consider the following 500-residue polypeptide: Cytochrome P450 monooxygenase ausI (500 aa).

Residues 8-28 (LALLGQPLVPGLMVVSAILYL) form a helical membrane-spanning segment. A heme-binding site is contributed by Cys440.

This sequence belongs to the cytochrome P450 family. Requires heme as cofactor.

The protein localises to the membrane. It functions in the pathway secondary metabolite biosynthesis; terpenoid biosynthesis. Its function is as follows. Cytochrome P450 monooxygenase; part of the gene cluster B that mediates the biosynthesis of the fungal meroterpenoid acetoxydehydroaustin. The first step of the pathway is the synthesis of 3,5-dimethylorsellinic acid by the polyketide synthase ausA. 3,5-dimethylorsellinic acid is then prenylated by the polyprenyl transferase ausN. Further epoxidation by the FAD-dependent monooxygenase ausM and cyclization by the probable terpene cyclase ausL lead to the formation of protoaustinoid A. Protoaustinoid A is then oxidized to spiro-lactone preaustinoid A3 by the combined action of the FAD-binding monooxygenases ausB and ausC, and the dioxygenase ausE. Acid-catalyzed keto-rearrangement and ring contraction of the tetraketide portion of preaustinoid A3 by ausJ lead to the formation of preaustinoid A4. The aldo-keto reductase ausK, with the help of ausH, is involved in the next step by transforming preaustinoid A4 into isoaustinone which is in turn hydroxylated by the P450 monooxygenase ausI to form austinolide. The cytochrome P450 monooxygenase ausG then modifies austinolide to austinol. Austinol is further acetylated to austin by the O-acetyltransferase ausP, which spontaneously changes to dehydroaustin. The cytochrome P450 monooxygenase then converts dehydroaustin is into 7-dehydrodehydroaustin. The hydroxylation catalyzed by ausR permits the second O-acetyltransferase ausQ to add an additional acetyl group to the molecule, leading to the formation of acetoxydehydroaustin. Due to genetic rearrangements of the clusters and the subsequent loss of some enzymes, the end product of the Penicillium brasilianum austinoid biosynthesis clusters is acetoxydehydroaustin. The polypeptide is Cytochrome P450 monooxygenase ausI (Penicillium brasilianum).